The following is a 335-amino-acid chain: Methionine import ATP-binding protein MetN 2 (335 aa).

The ABC transporter domain maps to 2–242 (IEFHDVHKTY…PQHPTTRRFV (241 aa)). Residue 38–45 (GHSGAGKS) coordinates ATP.

This sequence belongs to the ABC transporter superfamily. Methionine importer (TC 3.A.1.24) family. The complex is composed of two ATP-binding proteins (MetN), two transmembrane proteins (MetI) and a solute-binding protein (MetQ).

It localises to the cell inner membrane. It catalyses the reaction L-methionine(out) + ATP + H2O = L-methionine(in) + ADP + phosphate + H(+). The catalysed reaction is D-methionine(out) + ATP + H2O = D-methionine(in) + ADP + phosphate + H(+). In terms of biological role, part of the ABC transporter complex MetNIQ involved in methionine import. Responsible for energy coupling to the transport system. The chain is Methionine import ATP-binding protein MetN 2 from Pseudomonas aeruginosa (strain UCBPP-PA14).